A 239-amino-acid polypeptide reads, in one-letter code: Small ribosomal subunit protein uS2 (239 aa).

The protein belongs to the universal ribosomal protein uS2 family.

The chain is Small ribosomal subunit protein uS2 from Francisella tularensis subsp. holarctica (strain FTNF002-00 / FTA).